A 202-amino-acid chain; its full sequence is uncharacterized protein (202 aa).

The tract at residues 118–202 is disordered; it reads SSVSPVSSKK…KVSGTKKVKA (85 aa). S121 bears the Phosphoserine mark. 2 stretches are compositionally biased toward basic residues: residues 142 to 163 and 186 to 202; these read EKSKKKKEKKEKKDKLKKKSKR and SSKSGLKKVSGTKKVKA.

It is found in the nucleus. Its subcellular location is the nucleolus. This is an uncharacterized protein from Schizosaccharomyces pombe (strain 972 / ATCC 24843) (Fission yeast).